Consider the following 65-residue polypeptide: Alpha-toxin Bs-Tx28 (65 aa).

The region spanning Arg-3–Arg-65 is the LCN-type CS-alpha/beta domain. 4 disulfides stabilise this stretch: Cys-13–Cys-64, Cys-17–Cys-37, Cys-23–Cys-47, and Cys-27–Cys-49. Position 65 is an arginine amide (Arg-65).

Belongs to the long (4 C-C) scorpion toxin superfamily. Sodium channel inhibitor family. Alpha subfamily. In terms of tissue distribution, expressed by the venom gland.

The protein resides in the secreted. Alpha toxins bind voltage-independently at site-3 of sodium channels (Nav) and inhibit the inactivation of the activated channels, thereby blocking neuronal transmission. This toxin inhibits the inactivation of activated TTX-sensitive sodium channels (Nav). This chain is Alpha-toxin Bs-Tx28, found in Hottentotta tamulus sindicus (Scorpion).